The chain runs to 459 residues: 2-(3-amino-3-carboxypropyl)histidine synthase subunit 1 (459 aa).

Residues 1-68 (MEDDRAQVDL…AGANTSIEDS (68 aa)) form a disordered region. Low complexity predominate over residues 41-61 (SAAAGKSSSSSSNSTSQPAGA). Positions 165, 268, and 403 each coordinate [4Fe-4S] cluster.

The protein belongs to the DPH1/DPH2 family. DPH1 subfamily. As to quaternary structure, component of the 2-(3-amino-3-carboxypropyl)histidine synthase complex composed of dph-1, dph-2, dph-3 and a NADH-dependent reductase, predominantly cbr-1. [4Fe-4S] cluster is required as a cofactor.

The protein resides in the cytoplasm. It carries out the reaction L-histidyl-[translation elongation factor 2] + S-adenosyl-L-methionine = 2-[(3S)-amino-3-carboxypropyl]-L-histidyl-[translation elongation factor 2] + S-methyl-5'-thioadenosine + H(+). Its pathway is protein modification; peptidyl-diphthamide biosynthesis. Catalyzes the first step of diphthamide biosynthesis, a post-translational modification of histidine which occurs in elongation factor 2. Dph-1 and dph-2 transfer a 3-amino-3-carboxypropyl (ACP) group from S-adenosyl-L-methionine (SAM) to a histidine residue, the reaction is assisted by a reduction system comprising dph-3 and a NADH-dependent reductase, predominantly cbr-1. The chain is 2-(3-amino-3-carboxypropyl)histidine synthase subunit 1 (dph-1) from Neurospora crassa (strain ATCC 24698 / 74-OR23-1A / CBS 708.71 / DSM 1257 / FGSC 987).